The primary structure comprises 64 residues: Potassium channel toxin alpha-KTx J123 (64 aa).

The first 21 residues, 1–21 (MNKVYLVAVLVLFLALTINES), serve as a signal peptide directing secretion. 3 disulfides stabilise this stretch: C30–C52, C37–C60, and C41–C62.

Belongs to the short scorpion toxin superfamily. Potassium channel inhibitor family. Alpha-KTx 11 subfamily. Expressed by the venom gland.

It localises to the secreted. Its function is as follows. This recombinant toxin inhibits mammalian voltage-gated potassium channels Kv1.3/KCNA3 (IC(50)=0.79 nM) and Kv1.2/KCNA2 (IC(50)=26.4 nM). The polypeptide is Potassium channel toxin alpha-KTx J123 (Olivierus martensii (Manchurian scorpion)).